The chain runs to 234 residues: Myelin protein zero-like protein 3 (234 aa).

A signal peptide spans 1–31; that stretch reads MQQSGVPGSRGCALCPLLGVLFFQGVYVIFS. Residues 32–148 enclose the Ig-like V-type domain; sequence LEIKADAHVR…NIPATELTVT (117 aa). Over 32 to 158 the chain is Extracellular; that stretch reads LEIKADAHVR…ERGFGTMLSS (127 aa). Cys-52 and Cys-128 are joined by a disulfide. Asn-123 carries an N-linked (GlcNAc...) asparagine glycan. The helical transmembrane segment at 159–179 threads the bilayer; the sequence is VALLSILVFIPSTVVVILLLV. Topologically, residues 180 to 234 are cytoplasmic; that stretch reads RMGRKSAGLKKRSKSGYKKSSIEVSDDTDQEGDDCMAKLCVRCAECVDSDYEETY.

The protein belongs to the myelin P0 protein family.

It localises to the membrane. Mediates homophilic cell-cell adhesion. This is Myelin protein zero-like protein 3 (MPZL3) from Bos taurus (Bovine).